The following is a 177-amino-acid chain: ATP synthase subunit delta 1 (177 aa).

Belongs to the ATPase delta chain family. As to quaternary structure, F-type ATPases have 2 components, F(1) - the catalytic core - and F(0) - the membrane proton channel. F(1) has five subunits: alpha(3), beta(3), gamma(1), delta(1), epsilon(1). F(0) has three main subunits: a(1), b(2) and c(10-14). The alpha and beta chains form an alternating ring which encloses part of the gamma chain. F(1) is attached to F(0) by a central stalk formed by the gamma and epsilon chains, while a peripheral stalk is formed by the delta and b chains.

The protein localises to the cell inner membrane. In terms of biological role, f(1)F(0) ATP synthase produces ATP from ADP in the presence of a proton or sodium gradient. F-type ATPases consist of two structural domains, F(1) containing the extramembraneous catalytic core and F(0) containing the membrane proton channel, linked together by a central stalk and a peripheral stalk. During catalysis, ATP synthesis in the catalytic domain of F(1) is coupled via a rotary mechanism of the central stalk subunits to proton translocation. This protein is part of the stalk that links CF(0) to CF(1). It either transmits conformational changes from CF(0) to CF(1) or is implicated in proton conduction. The polypeptide is ATP synthase subunit delta 1 (Vibrio atlanticus (strain LGP32) (Vibrio splendidus (strain Mel32))).